The primary structure comprises 208 residues: Thymidylate kinase (208 aa).

10-17 (GPDGSGKT) provides a ligand contact to ATP.

This sequence belongs to the thymidylate kinase family.

It catalyses the reaction dTMP + ATP = dTDP + ADP. Functionally, phosphorylation of dTMP to form dTDP in both de novo and salvage pathways of dTTP synthesis. This Listeria monocytogenes serotype 4a (strain HCC23) protein is Thymidylate kinase.